We begin with the raw amino-acid sequence, 552 residues long: MEKVQQTIRAPRGTELQTKGWVQEAALRMLMNNLDPEVAEKPEELVVYGGIGRAARNWESYQAIVDSLKTLESDETLLVQSGKPVAIFKSHEDAPRVLLANSNLVPKWANWDHFRELEKKGLMMYGQMTAGSWIYIGTQGILQGTYETFGEAARQHFGGSLKGTLTLTAGLGGMGGAQPLAVTMNGGVVIAIDVDKRSIDRRIEKRYCDMYTESLEEALAVANEYKEKKEPISIGLLGNAAEILPELVKRNITPDLVTDQTSAHDPLNGYIPVGYTLEEAAKLREEDPERYVQLSKESMTKHVEAMLAMQEKGAITFDYGNNIRQVAFDEGLKNAFDFPGFVPAFIRPLFCEGKGPFRWVALSGDPEDIYKTDEVILREFADNEHLCNWIRMARQQVEFQGLPSRICWLGYGERAKFGRIINEMVANGELSAPIVIGRDHLDCGSVASPNRETEAMKDGSDAVADWPILNALINSVNGASWVSVHHGGGVGMGYSLHAGMVIVADGTEAAAKRIERVLTSDPGMGVVRHVDAGYDLAVKTAKEKGVNIPMMK.

NAD(+) contacts are provided by residues 49–50 (GG), Gln127, 173–175 (GMG), Asp193, 239–240 (NA), 260–264 (QTSAH), 270–271 (YI), and Tyr319. Residue Cys407 is part of the active site. An NAD(+)-binding site is contributed by Gly489.

It belongs to the urocanase family. NAD(+) serves as cofactor.

The protein localises to the cytoplasm. The catalysed reaction is 4-imidazolone-5-propanoate = trans-urocanate + H2O. It participates in amino-acid degradation; L-histidine degradation into L-glutamate; N-formimidoyl-L-glutamate from L-histidine: step 2/3. In terms of biological role, catalyzes the conversion of urocanate to 4-imidazolone-5-propionate. The protein is Urocanate hydratase of Bacillus cereus (strain 03BB102).